Consider the following 127-residue polypeptide: Aspartate 1-decarboxylase (127 aa).

S25 acts as the Schiff-base intermediate with substrate; via pyruvic acid in catalysis. S25 carries the post-translational modification Pyruvic acid (Ser). T57 is a binding site for substrate. Y58 serves as the catalytic Proton donor. A substrate-binding site is contributed by 73-75; sequence GAA.

It belongs to the PanD family. As to quaternary structure, heterooctamer of four alpha and four beta subunits. The cofactor is pyruvate. In terms of processing, is synthesized initially as an inactive proenzyme, which is activated by self-cleavage at a specific serine bond to produce a beta-subunit with a hydroxyl group at its C-terminus and an alpha-subunit with a pyruvoyl group at its N-terminus.

The protein localises to the cytoplasm. It carries out the reaction L-aspartate + H(+) = beta-alanine + CO2. The protein operates within cofactor biosynthesis; (R)-pantothenate biosynthesis; beta-alanine from L-aspartate: step 1/1. In terms of biological role, catalyzes the pyruvoyl-dependent decarboxylation of aspartate to produce beta-alanine. This is Aspartate 1-decarboxylase from Clostridium kluyveri (strain NBRC 12016).